The primary structure comprises 361 residues: MNNSILNKLKSLRNRYQEIEIMLTQKNVISNRENLKTLSKEYLKLSEIIKYFIEWEKLEVDIENVNILLNDVEIQGMAEEELYFFNKKKKALEKKINQLLLPEDPNDKHSCFIEIRSATGGDESSIFAGELFRMYLRYAESYSWKVEIMNTSESEKGGFKEIIAKITGRGACGRLKFESGGHRVQRVPETESQGRIHTSTCTVAVMPVTPKTEKEEINSSDLKIDTFRSSGAGGQHVNTTDSAIRITHIPTGNVVECQDERSQHKNKAKALSILSARVYAAKLEKDRQESSSMRKILLGTGERSDRNRTYNFPQNRITDHRINLSIYKLDEVLQGKLDLLIDPIIQEYQADMLSSLSKSES.

An N5-methylglutamine modification is found at Q235.

Belongs to the prokaryotic/mitochondrial release factor family. Post-translationally, methylated by PrmC. Methylation increases the termination efficiency of RF1.

It is found in the cytoplasm. Peptide chain release factor 1 directs the termination of translation in response to the peptide chain termination codons UAG and UAA. The sequence is that of Peptide chain release factor 1 from Buchnera aphidicola subsp. Acyrthosiphon pisum (strain 5A).